Here is a 555-residue protein sequence, read N- to C-terminus: 3-oxocholest-4-en-26-oate--CoA ligase (555 aa).

Residues 172-180, Asp-418, Arg-433, and Lys-524 contribute to the ATP site; that span reads TGGTTGHPK. The disordered stretch occupies residues 525-555; it reads PDYRWAKDQTGLRPADEVYNNGDGNGAAATG. Positions 544 to 555 are enriched in low complexity; sequence NNGDGNGAAATG.

This sequence belongs to the ATP-dependent AMP-binding enzyme family.

The catalysed reaction is (25S)-3-oxocholest-4-en-26-oate + ATP + CoA = (25S)-3-oxocholest-4-en-26-oyl-CoA + AMP + diphosphate. The protein operates within steroid metabolism; cholesterol metabolism. In terms of biological role, involved in the degradation of the side chains of C-24 branched-chain sterols. Catalyzes the ATP-dependent CoA thioesterification of the sterol 3-oxocholest-4-en-26-oate to yield 3-oxocholest-4-en-26-oyl-CoA. It can also use beta-sitosterol, campesterol and 3beta-hydroxy-5-cholesten-26-oate. In Rhodococcus rhodochrous, this protein is 3-oxocholest-4-en-26-oate--CoA ligase.